Here is a 618-residue protein sequence, read N- to C-terminus: 1-deoxy-D-xylulose-5-phosphate synthase (618 aa).

Thiamine diphosphate is bound by residues H70 and 111–113 (GHS). D142 contacts Mg(2+). Residues 143 to 144 (GS), N171, Y278, and E360 each bind thiamine diphosphate. Position 171 (N171) interacts with Mg(2+).

Belongs to the transketolase family. DXPS subfamily. Homodimer. It depends on Mg(2+) as a cofactor. The cofactor is thiamine diphosphate.

It carries out the reaction D-glyceraldehyde 3-phosphate + pyruvate + H(+) = 1-deoxy-D-xylulose 5-phosphate + CO2. Its pathway is metabolic intermediate biosynthesis; 1-deoxy-D-xylulose 5-phosphate biosynthesis; 1-deoxy-D-xylulose 5-phosphate from D-glyceraldehyde 3-phosphate and pyruvate: step 1/1. Functionally, catalyzes the acyloin condensation reaction between C atoms 2 and 3 of pyruvate and glyceraldehyde 3-phosphate to yield 1-deoxy-D-xylulose-5-phosphate (DXP). This Helicobacter pylori (strain G27) protein is 1-deoxy-D-xylulose-5-phosphate synthase.